Reading from the N-terminus, the 205-residue chain is MGTAGAMQLCWVILGFLLFRGHNSQPTMTQTSSSQGGLGGLSLTTEPVSSNPGYIPSSEANRPSHLSSTGTPGAGVPSSGRDGGTSRDTFQTVPPNSTTMSLSMREDATILPSPTSETVLTVAAFGVISFIVILVVVVIILVGVVSLRFKCRKSKESEDPQKPGSSGLSESCSTANGEKDSITLISMKNINMNNGKQSLSAEKVL.

The N-terminal stretch at 1-24 (MGTAGAMQLCWVILGFLLFRGHNS) is a signal peptide. At 25–124 (QPTMTQTSSS…TSETVLTVAA (100 aa)) the chain is on the extracellular side. Polar residues-rich tracts occupy residues 49 to 71 (SSNPGYIPSSEANRPSHLSSTGT) and 86 to 101 (SRDTFQTVPPNSTTMS). Residues 49-101 (SSNPGYIPSSEANRPSHLSSTGTPGAGVPSSGRDGGTSRDTFQTVPPNSTTMS) are disordered. Residues 125–145 (FGVISFIVILVVVVIILVGVV) traverse the membrane as a helical segment. Residues 146–205 (SLRFKCRKSKESEDPQKPGSSGLSESCSTANGEKDSITLISMKNINMNNGKQSLSAEKVL) lie on the Cytoplasmic side of the membrane. The segment at 153 to 175 (KSKESEDPQKPGSSGLSESCSTA) is disordered. Over residues 163–175 (PGSSGLSESCSTA) the composition is skewed to polar residues. At Ser198 the chain carries Phosphoserine.

It belongs to the ECSCR family. As to quaternary structure, interacts with FLNA. Interacts with the 20S proteasome subunit PSMA7. Post-translationally, may be heavily O-glycosylated. As to expression, highest expression in endothelial cells. Also detected in vascular smooth muscle, macrophages, lymphocytes, and mast cells.

It localises to the cell membrane. The protein resides in the cytoplasm. Functionally, regulates endothelial chemotaxis and tube formation. Has a role in angiogenesis and apoptosis via modulation of the actin cytoskeleton and facilitation of proteasomal degradation of the apoptosis inhibitors BIRC3/IAP1 and BIRC2/IAP2. This chain is Endothelial cell-specific chemotaxis regulator (ECSCR), found in Homo sapiens (Human).